Here is a 97-residue protein sequence, read N- to C-terminus: UPF0213 protein BLi00048/BL00536 (97 aa).

The GIY-YIG domain maps to 4–79 (NSHYFYVLSC…KKLSRKNKER (76 aa)).

It belongs to the UPF0213 family.

This is UPF0213 protein BLi00048/BL00536 from Bacillus licheniformis (strain ATCC 14580 / DSM 13 / JCM 2505 / CCUG 7422 / NBRC 12200 / NCIMB 9375 / NCTC 10341 / NRRL NRS-1264 / Gibson 46).